Here is a 119-residue protein sequence, read N- to C-terminus: NADH-quinone oxidoreductase subunit A (119 aa).

The next 3 helical transmembrane spans lie at 7–27 (FPVL…VSIG), 63–83 (LVAI…PWGV), and 88–108 (IGWP…LGFA).

This sequence belongs to the complex I subunit 3 family. In terms of assembly, NDH-1 is composed of 14 different subunits. Subunits NuoA, H, J, K, L, M, N constitute the membrane sector of the complex.

Its subcellular location is the cell inner membrane. The enzyme catalyses a quinone + NADH + 5 H(+)(in) = a quinol + NAD(+) + 4 H(+)(out). NDH-1 shuttles electrons from NADH, via FMN and iron-sulfur (Fe-S) centers, to quinones in the respiratory chain. The immediate electron acceptor for the enzyme in this species is believed to be ubiquinone. Couples the redox reaction to proton translocation (for every two electrons transferred, four hydrogen ions are translocated across the cytoplasmic membrane), and thus conserves the redox energy in a proton gradient. This Paraburkholderia phytofirmans (strain DSM 17436 / LMG 22146 / PsJN) (Burkholderia phytofirmans) protein is NADH-quinone oxidoreductase subunit A.